The primary structure comprises 878 residues: Alanine--tRNA ligase (878 aa).

Residues His562, His566, Cys670, and His674 each contribute to the Zn(2+) site.

Belongs to the class-II aminoacyl-tRNA synthetase family. Requires Zn(2+) as cofactor.

The protein localises to the cytoplasm. The catalysed reaction is tRNA(Ala) + L-alanine + ATP = L-alanyl-tRNA(Ala) + AMP + diphosphate. In terms of biological role, catalyzes the attachment of alanine to tRNA(Ala) in a two-step reaction: alanine is first activated by ATP to form Ala-AMP and then transferred to the acceptor end of tRNA(Ala). Also edits incorrectly charged Ser-tRNA(Ala) and Gly-tRNA(Ala) via its editing domain. The protein is Alanine--tRNA ligase of Acinetobacter baylyi (strain ATCC 33305 / BD413 / ADP1).